We begin with the raw amino-acid sequence, 2096 residues long: Tudor domain-containing protein 6 (2096 aa).

In terms of domain architecture, Tudor 1 spans 65–120 (ASASPGELCLVQVGLLWHRCRVVSRQAQESRVFLLDEGRTITAGAGSLAPGRREFF). The segment at 287–316 (YRGSTGTGDENSTSATWEEREESPDKPGSP) is disordered. Polar residues predominate over residues 288 to 302 (RGSTGTGDENSTSAT). Thr293 is subject to Phosphothreonine. Tudor domains lie at 310 to 369 (PDKP…YFRM), 536 to 593 (KPEP…FRQL), 816 to 875 (HQRN…FLKV), 1033 to 1088 (PLNP…AYDV), 1352 to 1411 (PLQR…NAIL), and 1567 to 1626 (CPYI…ELLS). Residues Ser1722 and Ser2062 each carry the phosphoserine modification. Residues 2026–2084 (AFTVGSKCVVWSSLRNTWSKCEILETAEEGTRVLNLSNGMEEIVNPENVWNGIPKLDKS) enclose the Tudor 8 domain.

Found in a mRNP complex (i.e. messenger ribonucleoproteins which correspond to mRNA with bound proteins), at least composed of TDRD1, TDRD6, TDRD7 and DDX4. Found in a complex, at least composed of PIWIL1, PIWIL2, DDX4 and TDRD6. Interacts with Tex19.1 and probably Tex19.2. Interacts with PRMT5. Interacts with SNRPB (when methylated); to trigger spliceosome formation. Undergoes proteolytic cleavage near the C-terminal by an unknown protease during the transition from meiosis I to meiosis II in primary spermatocytes.

Its subcellular location is the cytoplasm. Functionally, tudor domain-containing protein involved in germ cell development, more specifically the formation of chromatoid body (during spermiogenesis), Balbiani body (during oogenesis), germ plasm (upon fertilization), and for proper miRNA expression and spliceosome maturation. Essential for RNA-dependent helicase UPF1 localization to chromatoid body, for UPF1-UPF2 and UPF1-DDX4 interactions which are required for mRNA degradation, using the extended 3' UTR-triggered nonsense-mediated mRNA decay (NMD) pathway. Involved in spliceosome maturation and mRNA splicing in prophase I spermatocytes through interaction with arginine N-methyltransferase PRMT5 and symmetrically arginine dimethylated SNRPB (small nuclear ribonucleoprotein-associated protein). This chain is Tudor domain-containing protein 6, found in Homo sapiens (Human).